Reading from the N-terminus, the 756-residue chain is 5-methyltetrahydropteroyltriglutamate--homocysteine methyltransferase (756 aa).

5-methyltetrahydropteroyltri-L-glutamate contacts are provided by residues Arg-16–Lys-19 and Lys-112. L-homocysteine-binding positions include Ile-432–Ser-434 and Glu-485. Residues Ile-432–Ser-434 and Glu-485 contribute to the L-methionine site. 5-methyltetrahydropteroyltri-L-glutamate-binding positions include Arg-516–Cys-517 and Trp-562. Asp-600 contributes to the L-homocysteine binding site. Residue Asp-600 participates in L-methionine binding. Residue Glu-606 coordinates 5-methyltetrahydropteroyltri-L-glutamate. Positions 642, 644, and 666 each coordinate Zn(2+). The active-site Proton donor is the His-695. Residue Cys-727 coordinates Zn(2+).

This sequence belongs to the vitamin-B12 independent methionine synthase family. The cofactor is Zn(2+).

It catalyses the reaction 5-methyltetrahydropteroyltri-L-glutamate + L-homocysteine = tetrahydropteroyltri-L-glutamate + L-methionine. It participates in amino-acid biosynthesis; L-methionine biosynthesis via de novo pathway; L-methionine from L-homocysteine (MetE route): step 1/1. Catalyzes the transfer of a methyl group from 5-methyltetrahydrofolate to homocysteine resulting in methionine formation. The sequence is that of 5-methyltetrahydropteroyltriglutamate--homocysteine methyltransferase from Haemophilus influenzae (strain PittEE).